The following is a 95-amino-acid chain: Phosphoribosyl-ATP pyrophosphatase (95 aa).

The protein belongs to the PRA-PH family.

It is found in the cytoplasm. The enzyme catalyses 1-(5-phospho-beta-D-ribosyl)-ATP + H2O = 1-(5-phospho-beta-D-ribosyl)-5'-AMP + diphosphate + H(+). The protein operates within amino-acid biosynthesis; L-histidine biosynthesis; L-histidine from 5-phospho-alpha-D-ribose 1-diphosphate: step 2/9. This Methanocella arvoryzae (strain DSM 22066 / NBRC 105507 / MRE50) protein is Phosphoribosyl-ATP pyrophosphatase.